We begin with the raw amino-acid sequence, 363 residues long: Isopentenyl-diphosphate delta-isomerase (363 aa).

Arginine 7 to lysine 8 contacts substrate. FMN contacts are provided by residues alanine 71–threonine 73, serine 101, and asparagine 130. A substrate-binding site is contributed by glutamine 160. Glutamate 161 contributes to the Mg(2+) binding site. FMN is bound by residues lysine 192, serine 217, threonine 222, glycine 270–arginine 272, and alanine 291–glycine 292.

The protein belongs to the IPP isomerase type 2 family. Homooctamer. Dimer of tetramers. The cofactor is FMN. Requires NADPH as cofactor. Mg(2+) is required as a cofactor.

It is found in the cytoplasm. The catalysed reaction is isopentenyl diphosphate = dimethylallyl diphosphate. Involved in the biosynthesis of isoprenoids. Catalyzes the 1,3-allylic rearrangement of the homoallylic substrate isopentenyl (IPP) to its allylic isomer, dimethylallyl diphosphate (DMAPP). In Symbiobacterium thermophilum (strain DSM 24528 / JCM 14929 / IAM 14863 / T), this protein is Isopentenyl-diphosphate delta-isomerase.